Reading from the N-terminus, the 350-residue chain is Geranylgeranyl pyrophosphate synthase (350 aa).

The isopentenyl diphosphate site is built by Lys-66, Arg-69, and His-98. Mg(2+) is bound by residues Asp-105 and Asp-109. Arg-114 lines the dimethylallyl diphosphate pocket. Arg-115 contributes to the isopentenyl diphosphate binding site. Dimethylallyl diphosphate-binding residues include Lys-200, Thr-201, Gln-236, Asn-243, and Lys-263.

This sequence belongs to the FPP/GGPP synthase family. Mg(2+) is required as a cofactor.

The catalysed reaction is isopentenyl diphosphate + dimethylallyl diphosphate = (2E)-geranyl diphosphate + diphosphate. The enzyme catalyses isopentenyl diphosphate + (2E)-geranyl diphosphate = (2E,6E)-farnesyl diphosphate + diphosphate. It carries out the reaction isopentenyl diphosphate + (2E,6E)-farnesyl diphosphate = (2E,6E,10E)-geranylgeranyl diphosphate + diphosphate. Its pathway is secondary metabolite biosynthesis; terpenoid biosynthesis. Geranylgeranyl pyrophosphate synthase; part of the gene cluster that mediates the biosynthesis of pleuromutilin, a tricyclic diterpene showing antibacterial properties. The geranylgeranyl diphosphate (GGPP) synthase catalyzes the first step in pleuromutilin biosynthesis. GGPP is then substrate of the premutilin synthase (PS) to yield premutilin. Premutilin synthase is a bifunctional enzyme composed of the fusion of a class II diterpene cyclase (DTC) and a class I diterpene synthase (DTS), with the corresponding domains and active sites containing characteristic aspartate-rich motifs. GGPP is first converted to mutildienyl-diphosphate (MPP) at the class II DTC site. MPP is subsequently further cyclized at the class I DTS site, followed by a 1,5-hydride shift and addition of water prior to terminating deprotonation, to yield premutilin. In addition to the aforementioned GGPP synthase and bifunctional diterpene synthase, the cluster also contains three cytochrome P450 monooxygenases, a short-chain alcohol dehydrogenase, and an acyltransferase, involved in the conversion of premutilin to pleuromutilin. The cytochrome P450 monooxygenases P450-1 and P450-2 hydroxylate premutilin at C-11 and C-3, respectively, producing 11-hydroxypremutilin and 3-hydroxypremutilin. The combination of the actions of both ple5 and ple6 leads to the production of 3,11-dihydroxypremutilin. The short chain dehydrogenase SDR further converts 3,11-dihydroxypremutilin into mutilin. The acetyltransferase ATF then acetylates mutilin to produce 14-O-acetylmutilin. Finally, the cytochrome P450 monooxygenase P450-3 catalyzes hydroxylation on the alpha position of the acetyl side chain of 14-O-acetylmutilin to yield pleuromutilin. This Clitopilus passeckerianus (Pleurotus passeckerianus) protein is Geranylgeranyl pyrophosphate synthase.